Consider the following 258-residue polypeptide: Imidazole glycerol phosphate synthase subunit HisF (258 aa).

Catalysis depends on residues aspartate 11 and aspartate 130.

The protein belongs to the HisA/HisF family. In terms of assembly, heterodimer of HisH and HisF.

The protein localises to the cytoplasm. The catalysed reaction is 5-[(5-phospho-1-deoxy-D-ribulos-1-ylimino)methylamino]-1-(5-phospho-beta-D-ribosyl)imidazole-4-carboxamide + L-glutamine = D-erythro-1-(imidazol-4-yl)glycerol 3-phosphate + 5-amino-1-(5-phospho-beta-D-ribosyl)imidazole-4-carboxamide + L-glutamate + H(+). It participates in amino-acid biosynthesis; L-histidine biosynthesis; L-histidine from 5-phospho-alpha-D-ribose 1-diphosphate: step 5/9. IGPS catalyzes the conversion of PRFAR and glutamine to IGP, AICAR and glutamate. The HisF subunit catalyzes the cyclization activity that produces IGP and AICAR from PRFAR using the ammonia provided by the HisH subunit. The protein is Imidazole glycerol phosphate synthase subunit HisF of Escherichia coli O1:K1 / APEC.